Here is a 118-residue protein sequence, read N- to C-terminus: Small ribosomal subunit protein uS13 (118 aa).

The tract at residues 94–118 (SLPLRGQRTKTNARTRKGPRKPIKK) is disordered.

Belongs to the universal ribosomal protein uS13 family. In terms of assembly, part of the 30S ribosomal subunit. Forms a loose heterodimer with protein S19. Forms two bridges to the 50S subunit in the 70S ribosome.

Functionally, located at the top of the head of the 30S subunit, it contacts several helices of the 16S rRNA. In the 70S ribosome it contacts the 23S rRNA (bridge B1a) and protein L5 of the 50S subunit (bridge B1b), connecting the 2 subunits; these bridges are implicated in subunit movement. Contacts the tRNAs in the A and P-sites. The protein is Small ribosomal subunit protein uS13 of Vibrio vulnificus (strain CMCP6).